The primary structure comprises 210 residues: Protein-methionine-sulfoxide reductase heme-binding subunit MsrQ (210 aa).

A run of 6 helical transmembrane segments spans residues 8-28 (LAVF…AWIF), 37-57 (VLVE…MSMT), 75-95 (LGLW…LFIL), 110-130 (PYII…VTSN), 147-167 (LIYV…RADL), and 169-189 (EWAL…PMIT).

It belongs to the MsrQ family. Heterodimer of a catalytic subunit (MsrP) and a heme-binding subunit (MsrQ). It depends on FMN as a cofactor. The cofactor is heme b.

It is found in the cell inner membrane. In terms of biological role, part of the MsrPQ system that repairs oxidized periplasmic proteins containing methionine sulfoxide residues (Met-O), using respiratory chain electrons. Thus protects these proteins from oxidative-stress damage caused by reactive species of oxygen and chlorine generated by the host defense mechanisms. MsrPQ is essential for the maintenance of envelope integrity under bleach stress, rescuing a wide series of structurally unrelated periplasmic proteins from methionine oxidation. MsrQ provides electrons for reduction to the reductase catalytic subunit MsrP, using the quinone pool of the respiratory chain. The protein is Protein-methionine-sulfoxide reductase heme-binding subunit MsrQ of Pseudomonas savastanoi pv. phaseolicola (strain 1448A / Race 6) (Pseudomonas syringae pv. phaseolicola (strain 1448A / Race 6)).